A 229-amino-acid polypeptide reads, in one-letter code: Flagellar L-ring protein 1 (229 aa).

The N-terminal stretch at 1–18 (MYLRKISAPLMTMLLLNG) is a signal peptide. Residue C19 is the site of N-palmitoyl cysteine attachment. C19 carries S-diacylglycerol cysteine lipidation.

It belongs to the FlgH family. The basal body constitutes a major portion of the flagellar organelle and consists of four rings (L,P,S, and M) mounted on a central rod.

It localises to the cell outer membrane. The protein localises to the bacterial flagellum basal body. Its function is as follows. Assembles around the rod to form the L-ring and probably protects the motor/basal body from shearing forces during rotation. The protein is Flagellar L-ring protein 1 (flgH1) of Yersinia pseudotuberculosis serotype I (strain IP32953).